The chain runs to 353 residues: UDP-N-acetylglucosamine--N-acetylmuramyl-(pentapeptide) pyrophosphoryl-undecaprenol N-acetylglucosamine transferase (353 aa).

UDP-N-acetyl-alpha-D-glucosamine is bound by residues 11 to 13 (SAG), R164, S194, and Q289.

Belongs to the glycosyltransferase 28 family. MurG subfamily.

Its subcellular location is the cell membrane. The enzyme catalyses di-trans,octa-cis-undecaprenyl diphospho-N-acetyl-alpha-D-muramoyl-L-alanyl-D-glutamyl-meso-2,6-diaminopimeloyl-D-alanyl-D-alanine + UDP-N-acetyl-alpha-D-glucosamine = di-trans,octa-cis-undecaprenyl diphospho-[N-acetyl-alpha-D-glucosaminyl-(1-&gt;4)]-N-acetyl-alpha-D-muramoyl-L-alanyl-D-glutamyl-meso-2,6-diaminopimeloyl-D-alanyl-D-alanine + UDP + H(+). Its pathway is cell wall biogenesis; peptidoglycan biosynthesis. In terms of biological role, cell wall formation. Catalyzes the transfer of a GlcNAc subunit on undecaprenyl-pyrophosphoryl-MurNAc-pentapeptide (lipid intermediate I) to form undecaprenyl-pyrophosphoryl-MurNAc-(pentapeptide)GlcNAc (lipid intermediate II). This chain is UDP-N-acetylglucosamine--N-acetylmuramyl-(pentapeptide) pyrophosphoryl-undecaprenol N-acetylglucosamine transferase, found in Clostridium kluyveri (strain ATCC 8527 / DSM 555 / NBRC 12016 / NCIMB 10680 / K1).